Here is a 905-residue protein sequence, read N- to C-terminus: Toll-like receptor 3 (905 aa).

Positions M1 to S25 are cleaved as a signal peptide. Positions T26 to S52 constitute an LRRNT domain. Residues T26–L705 are Lumenal-facing. C29 and C38 are joined by a disulfide. Residues N53, N58, and N71 are each glycosylated (N-linked (GlcNAc...) asparagine). LRR repeat units follow at residues N53–R74, Q77–I98, L101–F122, N125–N146, N149–Q170, and N173–G196. A disulfide bridge connects residues C96 and C123. The N-linked (GlcNAc...) asparagine glycan is linked to N125. N-linked (GlcNAc...) asparagine glycosylation occurs at N197. An LRR 7 repeat occupies S199 to T220. Residues N248, N253, N276, and N292 are each glycosylated (N-linked (GlcNAc...) asparagine). LRR repeat units lie at residues S250–G271, N276–Y297, S300–G321, N324–P345, Y357–G378, S381–T401, P409–W430, Q433–R454, N458–L479, S482–P502, N508–G529, N532–G553, H564–N585, E588–D609, and S612–P633. N-linked (GlcNAc...) asparagine glycans are attached at residues N399, N414, and N425. N-linked (GlcNAc...) asparagine glycosylation is present at N508. An LRRCT domain is found at N646 to D699. 2 cysteine pairs are disulfide-bonded: C650/C678 and C652/C697. N-linked (GlcNAc...) asparagine glycans are attached at residues N663 and N668. The helical transmembrane segment at L706–I726 threads the bilayer. The Cytoplasmic segment spans residues E727–H905. Residues F755–L898 enclose the TIR domain. Y760 carries the post-translational modification Phosphotyrosine. Residues K766, K813, and K832 each participate in a glycyl lysine isopeptide (Lys-Gly) (interchain with G-Cter in ubiquitin) cross-link. The residue at position 859 (Y859) is a Phosphotyrosine.

The protein belongs to the Toll-like receptor family. In terms of assembly, monomer and homodimer; dimerization is triggered by ligand-binding, the signaling unit is composed of one ds-RNA of around 40 bp and two TLR3 molecules, and lateral clustering of signaling units along the length of the ds-RNA ligand is required for TLR3 signal transduction. Interacts (via transmembrane domain) with UNC93B1; the interaction is required for transport from the ER to the endosomes. Interacts with SRC; upon binding of double-stranded RNA. Interacts with TICAM1 (via the TIR domain) in response to poly(I:C) and this interaction is enhanced in the presence of WDFY1. The tyrosine-phosphorylated form (via TIR domain) interacts with WDFY1 (via WD repeat 2) in response to poly(I:C). Ubiquitinated by RNF170 at Lys-766 via 'Lys-48'-linked ubiquitin chains; leading to TLR3 proteasomal degradation. TLR3 signaling requires a proteolytic cleavage mediated by cathepsins CTSB and CTSH, the cleavage occurs between amino acids 252 and 346. The cleaved form of TLR3 is the predominant form found in endosomes. In terms of processing, ubiquitinated by TRIM3; leading to recognition and sorting of polyubiquitinated TLR3 by the ESCRT complexes. Ubiquitinated by ZNRF1 via 'Lys-63'-linked ubiquitin chains; leading to TLR3 lysosomal trafficking and degradation. Highly expressed in lung. After intraperitoneal injection of lipopolysaccharide, highly expressed in brain, heart, kidney, liver, lung and spleen.

It is found in the endoplasmic reticulum membrane. It localises to the endosome membrane. The protein resides in the early endosome. Functionally, key component of innate and adaptive immunity. TLRs (Toll-like receptors) control host immune response against pathogens through recognition of molecular patterns specific to microorganisms. TLR3 is a nucleotide-sensing TLR which is activated by double-stranded RNA, a sign of viral infection. Acts via the adapter TRIF/TICAM1, leading to NF-kappa-B activation, IRF3 nuclear translocation, cytokine secretion and the inflammatory response. The protein is Toll-like receptor 3 of Mus musculus (Mouse).